The sequence spans 876 residues: MPSAESMTPSSALGQLKATGQHVLSKLQQQTSNADIIDIRRVAVEINLKTEITSMFRPKDGPRQLPTLLLYNERGLQLFERITYLEEYYLTNDEIKILTKHATEMASFIPSGAMIIELGSGNLRKVNLLLEALDNAGKAIDYYALDLSREELERTLAQVPSYKHVKCHGLLGTYDDGRDWLKAPENINKQKCILHLGSSIGNFNRSDAATFLKGFTDVLGPNDKMLIGVDACNDPARVYHAYNDKVGITHEFILNGLRNANEIIGETAFIEGDWRVIGEYVYDEEGGRHQAFYAPTRDTMVMGELIRSHDRIQIEQSLKYSKEESERLWSTAGLEQVSEWTYGNEYGLHLLAKSRMSFSLIPSVYARSALPTLDDWEALWATWDVVTRQMLPQEELLEKPIKLRNACIFYLGHIPTFLDIQLTKTTKQAPSEPAHFCKIFERGIDPDVDNPELCHAHSEIPDEWPPVEEILTYQETVRSRLRGLYAHGIANIPRNVGRAIWVGFEHELMHIETLLYMMLQSDKTLIPTHIPRPDFDKLARKAESERVPNQWFKIPAQEITIGLDDPEDGSDINKHYGWDNEKPPRRVQVAAFQAQGRPITNEEYAQYLLEKNIDKLPASWARLDNENISNGTTNSVSGHHSNRTSKQQLPSSFLEKTAVRTVYGLVPLKHALDWPVFASYDELAGCAAYMGGRIPTFEETRSIYAYADALKKKKEAERQLGRTVPAVNAHLTNNGVEITPPSSPSSETPAESSSPSDSNTTLITTEDLFSDLDGANVGFHNWHPMPITSKGNTLVGQGELGGVWEWTSSVLRKWEGFEPMELYPGYTADFFDEKHNIVLGGSWATHPRIAGRKSFVNWYQRNYPYAWVGARVVRDL.

The interval 36 to 350 (IIDIRRVAVE…TYGNEYGLHL (315 aa)) is L-histidine N(alpha)-methyltransferase. Y88 contacts L-histidine. Positions 119, 125, and 146 each coordinate S-adenosyl-L-methionine. L-histidine is bound by residues N202, Y242, and 315–317 (EQS). The tract at residues 378–874 (ALWATWDVVT…YAWVGARVVR (497 aa)) is hercynylcysteine S-oxide synthase. 3 residues coordinate Fe cation: H413, H506, and H510. 2 disordered regions span residues 631-650 (GTTN…QQLP) and 732-761 (TNNG…SNTT). Positions 744-758 (PSSETPAESSSPSDS) are enriched in low complexity.

The protein in the N-terminal section; belongs to the methyltransferase superfamily. EgtD family. This sequence in the C-terminal section; belongs to the EgtB family. Requires Fe(2+) as cofactor.

Its subcellular location is the cytoplasm. The protein resides in the nucleus. It carries out the reaction L-histidine + 3 S-adenosyl-L-methionine = hercynine + 3 S-adenosyl-L-homocysteine + 3 H(+). The enzyme catalyses hercynine + L-cysteine + O2 = S-(hercyn-2-yl)-L-cysteine S-oxide + H2O. The protein operates within amino-acid biosynthesis; ergothioneine biosynthesis. In terms of biological role, catalyzes the SAM-dependent triple methylation of the alpha-amino group of histidine to form hercynine and subsequent conjugation with cysteine and oxygen to form hercynylcysteine sulfoxide, the first two steps in the biosynthesis pathway of ergothioneine. Ergothioneine is an unusual thio-histidine betaine amino acid that acts as an antioxidant against peroxide in conidia and contributes to conidial longevity. This Neurospora crassa (strain ATCC 24698 / 74-OR23-1A / CBS 708.71 / DSM 1257 / FGSC 987) protein is Ergothioneine biosynthesis protein 1.